The sequence spans 243 residues: NEDD4-binding protein 2-like 1 (243 aa).

Residues 1–38 (MEDSFLQSFGRLSLQPQQQQQRQRPPRPPPRGTPPRRH) are disordered.

As to quaternary structure, interacts with dynactin subunit proteins, including DCTN4, DCTN5 and DCTN5.

In terms of biological role, might play a role in adipocyte differentiation and triglyceride accumulation. This is NEDD4-binding protein 2-like 1 (N4BP2L1) from Homo sapiens (Human).